The primary structure comprises 485 residues: UDP-N-acetylmuramate--L-alanine ligase (485 aa).

Position 129-135 (129-135 (GTHGKTT)) interacts with ATP.

This sequence belongs to the MurCDEF family.

Its subcellular location is the cytoplasm. The catalysed reaction is UDP-N-acetyl-alpha-D-muramate + L-alanine + ATP = UDP-N-acetyl-alpha-D-muramoyl-L-alanine + ADP + phosphate + H(+). It participates in cell wall biogenesis; peptidoglycan biosynthesis. In terms of biological role, cell wall formation. This Vibrio parahaemolyticus serotype O3:K6 (strain RIMD 2210633) protein is UDP-N-acetylmuramate--L-alanine ligase.